A 124-amino-acid chain; its full sequence is Small ribosomal subunit protein uS12 (124 aa).

The residue at position 89 (aspartate 89) is a 3-methylthioaspartic acid.

Belongs to the universal ribosomal protein uS12 family. As to quaternary structure, part of the 30S ribosomal subunit. Contacts proteins S8 and S17. May interact with IF1 in the 30S initiation complex.

Functionally, with S4 and S5 plays an important role in translational accuracy. Interacts with and stabilizes bases of the 16S rRNA that are involved in tRNA selection in the A site and with the mRNA backbone. Located at the interface of the 30S and 50S subunits, it traverses the body of the 30S subunit contacting proteins on the other side and probably holding the rRNA structure together. The combined cluster of proteins S8, S12 and S17 appears to hold together the shoulder and platform of the 30S subunit. The sequence is that of Small ribosomal subunit protein uS12 from Shewanella halifaxensis (strain HAW-EB4).